The following is a 308-amino-acid chain: Putative S-adenosyl-L-methionine-dependent methyltransferase Mmcs_1045 (308 aa).

S-adenosyl-L-methionine-binding positions include D133 and 162-163 (DL).

It belongs to the UPF0677 family.

Exhibits S-adenosyl-L-methionine-dependent methyltransferase activity. The polypeptide is Putative S-adenosyl-L-methionine-dependent methyltransferase Mmcs_1045 (Mycobacterium sp. (strain MCS)).